A 221-amino-acid chain; its full sequence is UPF0758 protein HI_0952 (221 aa).

The 123-residue stretch at 99–221 (IINDPETVKL…CYSFAENCLL (123 aa)) folds into the MPN domain. 3 residues coordinate Zn(2+): His-170, His-172, and Asp-183. The JAMM motif motif lies at 170-183 (HNHPSGITEPSYSD).

The protein belongs to the UPF0758 family.

The chain is UPF0758 protein HI_0952 from Haemophilus influenzae (strain ATCC 51907 / DSM 11121 / KW20 / Rd).